The sequence spans 211 residues: Transcription antitermination protein NusB (211 aa).

The interval 152–211 (PAKKERVANPFPSTPPKKPENVPNPFSTPFKKNSSEPIRNPFEGNKSPQPPQKTLRRKKK) is disordered. Positions 175–188 (NPFSTPFKKNSSEP) are enriched in polar residues.

It belongs to the NusB family.

In terms of biological role, involved in transcription antitermination. Required for transcription of ribosomal RNA (rRNA) genes. Binds specifically to the boxA antiterminator sequence of the ribosomal RNA (rrn) operons. The protein is Transcription antitermination protein NusB of Chloroherpeton thalassium (strain ATCC 35110 / GB-78).